Consider the following 261-residue polypeptide: Cytochrome c oxidase subunit 3 (261 aa).

Residues 1-15 lie on the Mitochondrial matrix side of the membrane; it reads MTHQTHAYHMVNPSP. A helical membrane pass occupies residues 16–34; that stretch reads WPLTGALSALLMTSGLAMW. Over 35–40 the chain is Mitochondrial intermembrane; the sequence is FHYNLT. The chain crosses the membrane as a helical span at residues 41 to 66; sequence LLLTLGMTTNLLTMYQWWRDIIREST. The Mitochondrial matrix portion of the chain corresponds to 67 to 72; the sequence is FQGHHT. The chain crosses the membrane as a helical span at residues 73 to 105; the sequence is PIVQKGLRYGMILFIISEVFFFAGFFWAFYHSS. At 106 to 128 the chain is on the mitochondrial intermembrane side; that stretch reads LAPTPELGGCWPPTGIIPLNPLE. A helical transmembrane segment spans residues 129 to 152; the sequence is VPLLNTSVLLASGVSITWAHHSLM. At 153–155 the chain is on the mitochondrial matrix side; it reads EGN. A helical transmembrane segment spans residues 156–183; sequence RKHMLQALFITISLGVYFTLLQASEYYE. The Mitochondrial intermembrane portion of the chain corresponds to 184 to 190; that stretch reads TSFTISD. A helical membrane pass occupies residues 191-223; the sequence is GVYGSTFFMATGFHGLHVIIGSTFLIVCFLRQL. The Mitochondrial matrix segment spans residues 224–232; the sequence is KYHFTSNHH. A helical transmembrane segment spans residues 233–256; it reads FGFEAAAWYWHFVDVVWLFLYVSI. Residues 257–261 lie on the Mitochondrial intermembrane side of the membrane; sequence YWWGS.

Belongs to the cytochrome c oxidase subunit 3 family. Component of the cytochrome c oxidase (complex IV, CIV), a multisubunit enzyme composed of 14 subunits. The complex is composed of a catalytic core of 3 subunits MT-CO1, MT-CO2 and MT-CO3, encoded in the mitochondrial DNA, and 11 supernumerary subunits COX4I, COX5A, COX5B, COX6A, COX6B, COX6C, COX7A, COX7B, COX7C, COX8 and NDUFA4, which are encoded in the nuclear genome. The complex exists as a monomer or a dimer and forms supercomplexes (SCs) in the inner mitochondrial membrane with NADH-ubiquinone oxidoreductase (complex I, CI) and ubiquinol-cytochrome c oxidoreductase (cytochrome b-c1 complex, complex III, CIII), resulting in different assemblies (supercomplex SCI(1)III(2)IV(1) and megacomplex MCI(2)III(2)IV(2)).

The protein localises to the mitochondrion inner membrane. The enzyme catalyses 4 Fe(II)-[cytochrome c] + O2 + 8 H(+)(in) = 4 Fe(III)-[cytochrome c] + 2 H2O + 4 H(+)(out). Component of the cytochrome c oxidase, the last enzyme in the mitochondrial electron transport chain which drives oxidative phosphorylation. The respiratory chain contains 3 multisubunit complexes succinate dehydrogenase (complex II, CII), ubiquinol-cytochrome c oxidoreductase (cytochrome b-c1 complex, complex III, CIII) and cytochrome c oxidase (complex IV, CIV), that cooperate to transfer electrons derived from NADH and succinate to molecular oxygen, creating an electrochemical gradient over the inner membrane that drives transmembrane transport and the ATP synthase. Cytochrome c oxidase is the component of the respiratory chain that catalyzes the reduction of oxygen to water. Electrons originating from reduced cytochrome c in the intermembrane space (IMS) are transferred via the dinuclear copper A center (CU(A)) of subunit 2 and heme A of subunit 1 to the active site in subunit 1, a binuclear center (BNC) formed by heme A3 and copper B (CU(B)). The BNC reduces molecular oxygen to 2 water molecules using 4 electrons from cytochrome c in the IMS and 4 protons from the mitochondrial matrix. The protein is Cytochrome c oxidase subunit 3 (MT-CO3) of Felis catus (Cat).